Reading from the N-terminus, the 222-residue chain is Triosephosphate isomerase (222 aa).

10–12 (NCK) contacts substrate. His93 functions as the Electrophile in the catalytic mechanism. The active-site Proton acceptor is the Glu141. Residues Ile146, Gly180, and 201–202 (AS) contribute to the substrate site.

The protein belongs to the triosephosphate isomerase family. As to quaternary structure, homotetramer; dimer of dimers.

Its subcellular location is the cytoplasm. The catalysed reaction is D-glyceraldehyde 3-phosphate = dihydroxyacetone phosphate. It functions in the pathway carbohydrate biosynthesis; gluconeogenesis. The protein operates within carbohydrate degradation; glycolysis; D-glyceraldehyde 3-phosphate from glycerone phosphate: step 1/1. Functionally, involved in the gluconeogenesis. Catalyzes stereospecifically the conversion of dihydroxyacetone phosphate (DHAP) to D-glyceraldehyde-3-phosphate (G3P). In Cenarchaeum symbiosum (strain A), this protein is Triosephosphate isomerase.